Consider the following 270-residue polypeptide: Diaminopimelate epimerase (270 aa).

Substrate-binding residues include Asn-15, Gln-49, and Asn-66. Residue Cys-75 is the Proton donor of the active site. Substrate contacts are provided by residues 76 to 77 (GN), Asn-155, Asn-187, and 204 to 205 (ER). Cys-213 functions as the Proton acceptor in the catalytic mechanism. 214–215 (GS) contributes to the substrate binding site.

It belongs to the diaminopimelate epimerase family. As to quaternary structure, homodimer.

It localises to the cytoplasm. It catalyses the reaction (2S,6S)-2,6-diaminopimelate = meso-2,6-diaminopimelate. It functions in the pathway amino-acid biosynthesis; L-lysine biosynthesis via DAP pathway; DL-2,6-diaminopimelate from LL-2,6-diaminopimelate: step 1/1. Its function is as follows. Catalyzes the stereoinversion of LL-2,6-diaminopimelate (L,L-DAP) to meso-diaminopimelate (meso-DAP), a precursor of L-lysine and an essential component of the bacterial peptidoglycan. This chain is Diaminopimelate epimerase, found in Rickettsia akari (strain Hartford).